The chain runs to 445 residues: Competence protein E (445 aa).

Residues 1 to 23 form the signal peptide; that stretch reads MKKYFLKCGYFLVCFCLPLIVFA.

This sequence belongs to the bacterial secretin family. PilQ subfamily.

The protein resides in the cell outer membrane. In terms of biological role, involved in transformation (genetic competence for DNA uptake). This chain is Competence protein E (comE), found in Haemophilus influenzae (strain ATCC 51907 / DSM 11121 / KW20 / Rd).